We begin with the raw amino-acid sequence, 357 residues long: Inositol-tetrakisphosphate 1-kinase 3 (357 aa).

Residues lysine 56 and lysine 98 each coordinate 1D-myo-inositol 1,3,4-trisphosphate. 2 residues coordinate ATP: arginine 133 and lysine 183. Residues histidine 190 and lysine 222 each contribute to the 1D-myo-inositol 1,3,4-trisphosphate site. ATP contacts are provided by residues 211-222, serine 237, and serine 262; that span reads QEFVNHGGVLFK. Mg(2+) contacts are provided by aspartate 302, aspartate 317, and asparagine 319. 1D-myo-inositol 1,3,4-trisphosphate is bound at residue asparagine 319.

It belongs to the ITPK1 family. In terms of assembly, monomer. Mg(2+) is required as a cofactor.

It carries out the reaction 1D-myo-inositol 3,4,5,6-tetrakisphosphate + ATP = 1D-myo-inositol 1,3,4,5,6-pentakisphosphate + ADP + H(+). It catalyses the reaction 1D-myo-inositol 1,3,4-trisphosphate + ATP = 1D-myo-inositol 1,3,4,5-tetrakisphosphate + ADP + H(+). The enzyme catalyses 1D-myo-inositol 1,3,4-trisphosphate + ATP = 1D-myo-inositol 1,3,4,6-tetrakisphosphate + ADP + H(+). Functionally, kinase that can phosphorylate various inositol polyphosphate such as Ins(3,4,5,6)P4 or Ins(1,3,4)P3 and participates in phytic acid biosynthesis in developing seeds. Phytic acid is the primary storage form of phosphorus in cereal grains and other plant seeds. This is Inositol-tetrakisphosphate 1-kinase 3 (ITPK3) from Oryza sativa subsp. indica (Rice).